Consider the following 356-residue polypeptide: Glutamine synthetase N-1 (356 aa).

A GS beta-grasp domain is found at 19 to 99; it reads VIAEYIWVGG…VMCDAYTPAG (81 aa). The region spanning 106–356 is the GS catalytic domain; it reads KRHNAAKIFS…IAETTLLWKP (251 aa).

The protein belongs to the glutamine synthetase family. As to quaternary structure, homooctamer. As to expression, this is a nodule isozyme.

The protein resides in the cytoplasm. It carries out the reaction L-glutamate + NH4(+) + ATP = L-glutamine + ADP + phosphate + H(+). The protein is Glutamine synthetase N-1 (Gln-gamma) of Phaseolus vulgaris (Kidney bean).